We begin with the raw amino-acid sequence, 156 residues long: uncharacterized protein (156 aa).

A run of 5 helical transmembrane segments spans residues 6–26, 34–54, 68–88, 100–120, and 129–149; these read LIVLISFLIFYLSIFLAPYFA, FWKFISICLYAVYSLICHQMP, CARCFGIYTGVLVGMIIYPFI, WYLIIALIPMAVDGTTQLIGL, and FITGFIAGFTVVFYILPIFFE.

It is found in the cell membrane. This is an uncharacterized protein from Methanocaldococcus jannaschii (strain ATCC 43067 / DSM 2661 / JAL-1 / JCM 10045 / NBRC 100440) (Methanococcus jannaschii).